Reading from the N-terminus, the 41-residue chain is Pi-stichotoxin-Hcr5b (41 aa).

Intrachain disulfides connect cysteine 4–cysteine 37, cysteine 6–cysteine 30, and cysteine 20–cysteine 38.

It belongs to the sea anemone type 3 (BDS) potassium channel toxin family.

It localises to the secreted. The protein resides in the nematocyst. Its function is as follows. Remarkably non-selective toxin, with activity on many different ion channels. Weakly and reversibly inhibits rat and human homomeric ASIC1 (isoform ASIC1a) (IC(50)=4.8 uM, and IC(50)=14.6 uM), and ASIC3 (IC(50)=15.9 uM). Molecular modeling interaction with ASIC1a suggests that this peptide hinders the collapse of acidic pockets and stabilizes nonconducting channels state. It activates several potassium channels including Kv1.1/KCNA1, Kv1.2/KCNA2, and drosophila Shaker IR. It moderately to potently inhibits potassium channels including Kv1.3/KCNA3, Kv1.4/KCNA4, Kv1.5/KCNA5, Kv1.6/KCNA6, Kv2.1/KCNB1, Kv4.2/KCND2, Kv7.1/KCNQ1, Kv7.2/Kv7.3 (KCNQ2/KCNQ3), Kv7.4/KCNQ4, hERG/KCNH2, and C.elegans QKT1. On sodium channels, it moderately to potently inhibits Nav1.1/SCN1A, Nav1.2/SCN2A, Nav1.3/SCN3A, Nav1.4/SCN4A, Nav1.5/SCN5A, Nav1.6/SCN8A, Nav1.7/SCN9A, Nav1.8/SCN10A, and B.germanica BgNav. It also moderately to potently inhibits Cav3.1/CACNA1G, Cav3.2/CACNA1H, and Cav3.3/CACNA1I. Significant shifts in the voltage-current relationship are observed on Kv and Nav, depending on the channel isoform, whereas the toxin does not seem to modulate the voltage-sensor domains of Cav channels, acting mainly as a pore blocker. Does not activate nicotinic acetylcholine receptors (nAChR), but potentiates ACh-elicited current of human alpha-7/CHRNA7 nAChR. Is also able to bind T.californica muscle-type nAChRs. In vivo, causes an excitatory effect in mice behavior. Also shows antihyperalgesic and analgesic activity in the acid-induced muscle pain mice model, and weak anti-inflammatory effect in models of acute local inflammation. This Radianthus crispa (Leathery sea anemone) protein is Pi-stichotoxin-Hcr5b.